Reading from the N-terminus, the 161-residue chain is Putative acetyltransferase SAR0816 (161 aa).

Belongs to the transferase hexapeptide repeat family.

The polypeptide is Putative acetyltransferase SAR0816 (Staphylococcus aureus (strain MRSA252)).